The sequence spans 1390 residues: Hepatocyte growth factor receptor (1390 aa).

The first 24 residues, 1 to 24 (MKAPAVLAPGILVLLFTLVQRSNG), serve as a signal peptide directing secretion. Residues 25–932 (ECKEALAKSE…VIVQPDQNFT (908 aa)) are Extracellular-facing. In terms of domain architecture, Sema spans 27–515 (KEALAKSEMN…TGKKITKIPL (489 aa)). N-linked (GlcNAc...) asparagine glycosylation occurs at Asn-45. Disulfide bonds link Cys-95/Cys-101, Cys-98/Cys-160, Cys-133/Cys-141, and Cys-172/Cys-175. N-linked (GlcNAc...) asparagine glycosylation is present at Asn-106. Asn-149 carries an N-linked (GlcNAc...) asparagine glycan. Residue Asn-202 is glycosylated (N-linked (GlcNAc...) asparagine). Intrachain disulfides connect Cys-298/Cys-363 and Cys-385/Cys-397. 2 N-linked (GlcNAc...) asparagine glycosylation sites follow: Asn-399 and Asn-405. Disulfide bonds link Cys-520–Cys-538, Cys-526–Cys-561, Cys-529–Cys-545, and Cys-541–Cys-551. IPT/TIG domains lie at 563–655 (PAIY…FSYV), 657–739 (PVIT…FSYR), and 742–836 (PIVY…LIYV). Residue Thr-582 is glycosylated (O-linked (Man) threonine). A glycan (N-linked (GlcNAc...) asparagine) is linked at Asn-607. Cys-610 and Cys-624 are oxidised to a cystine. Residue Asn-635 is glycosylated (N-linked (GlcNAc...) asparagine). Thr-676 carries O-linked (Man) threonine glycosylation. Cys-697 and Cys-709 are disulfide-bonded. An O-linked (Man) threonine glycan is attached at Thr-761. 3 N-linked (GlcNAc...) asparagine glycosylation sites follow: Asn-785, Asn-879, and Asn-930. The helical transmembrane segment at 933–955 (GLIAGVVSISTALLLLLGFFLWL) threads the bilayer. Residues 956 to 1390 (KKRKQIKDLG…TRPASFWETS (435 aa)) are Cytoplasmic-facing. Phosphoserine is present on Ser-966. Phosphothreonine is present on Thr-977. Residues Ser-990, Ser-997, and Ser-1000 each carry the phosphoserine modification. Tyr-1003 is modified (phosphotyrosine). The Protein kinase domain occupies 1078-1345 (VHFNEVIGRG…RISAIFSTFI (268 aa)). ATP is bound by residues 1084-1092 (IGRGHFGCV) and Lys-1110. Residue Asp-1204 is the Proton acceptor of the active site. An interaction with RANBP9 region spans residues 1212–1390 (LDEKFTVKVA…TRPASFWETS (179 aa)). Tyr-1230 carries the phosphotyrosine modification. Phosphotyrosine; by autocatalysis is present on residues Tyr-1234 and Tyr-1235. Thr-1289 is subject to Phosphothreonine. The interaction with MUC20 stretch occupies residues 1320 to 1359 (WHPKAEMRPSFSELVSRISAIFSTFIGEHYVHVNATYVNV). Phosphotyrosine; by autocatalysis is present on residues Tyr-1349 and Tyr-1356. A Phosphotyrosine modification is found at Tyr-1365.

It belongs to the protein kinase superfamily. Tyr protein kinase family. As to quaternary structure, heterodimer made of an alpha chain (50 kDa) and a beta chain (145 kDa) which are disulfide linked. Binds PLXNB1. Interacts when phosphorylated with downstream effectors including STAT3, PIK3R1, SRC, PCLG1, GRB2 and GAB1. Interacts with SPSB1, SPSB2 and SPSB4. Interacts with INPP5D/SHIP1. When phosphorylated at Tyr-1356, interacts with INPPL1/SHIP2. Interacts with RANBP9 and RANBP10, as well as SPSB1, SPSB2, SPSB3 and SPSB4. SPSB1 binding occurs in the presence and in the absence of HGF, however HGF treatment has a positive effect on this interaction. Interacts with MUC20; prevents interaction with GRB2 and suppresses hepatocyte growth factor-induced cell proliferation. Interacts with GRB10. Interacts with PTPN1 and PTPN2. Interacts with LECT2; this interaction may have an antagonistic effect on receptor activation. Interacts with HSP90AA1 and HSP90AB1; the interaction suppresses MET kinase activity. Interacts with tensin TNS3. Interacts (when phosphorylated) with tensin TNS4 (via SH2 domain); the interaction increases MET protein stability by inhibiting MET endocytosis and subsequent lysosomal degradation. (Microbial infection) Interacts via extracytoplasmic residues 25-656 with L.monocytogenes InlB; MET can bind HGF, its endogenous ligand, and InlB simultaneously. InlB probably dimerizes upon binding to MET, which encourages subsequent dimerization of MET. In terms of processing, autophosphorylated in response to ligand binding on Tyr-1234 and Tyr-1235 in the kinase domain leading to further phosphorylation of Tyr-1349 and Tyr-1356 in the C-terminal multifunctional docking site. Dephosphorylated by PTPRJ at Tyr-1349 and Tyr-1365. Dephosphorylated by PTPN1 and PTPN2. Post-translationally, ubiquitinated. Ubiquitination by CBL regulates MET endocytosis, resulting in decreasing plasma membrane receptor abundance, and in endosomal degradation and/or recycling of internalized receptors. O-mannosylation of IPT/TIG domains by TMEM260 is required for protein maturation. O-mannosylated residues are composed of single mannose glycans that are not elongated or modified. In terms of processing, (Microbial infection) Tyrosine phosphorylation is stimulated by L.monocytogenes InlB. Tyrosine phosphorylation is maximal 10-20 minutes after treatment with InlB and disappears by 60 minutes. The phosphorylated residues were not identified. As to expression, expressed in normal hepatocytes as well as in epithelial cells lining the stomach, the small and the large intestine. Found also in basal keratinocytes of esophagus and skin. High levels are found in liver, gastrointestinal tract, thyroid and kidney. Also present in the brain. Expressed in metaphyseal bone (at protein level).

It is found in the membrane. The protein resides in the secreted. It carries out the reaction L-tyrosyl-[protein] + ATP = O-phospho-L-tyrosyl-[protein] + ADP + H(+). In its inactive state, the C-terminal tail interacts with the catalytic domain and inhibits the kinase activity. Upon ligand binding, the C-terminal tail is displaced and becomes phosphorylated, thus increasing the kinase activity. In terms of biological role, receptor tyrosine kinase that transduces signals from the extracellular matrix into the cytoplasm by binding to hepatocyte growth factor/HGF ligand. Regulates many physiological processes including proliferation, scattering, morphogenesis and survival. Ligand binding at the cell surface induces autophosphorylation of MET on its intracellular domain that provides docking sites for downstream signaling molecules. Following activation by ligand, interacts with the PI3-kinase subunit PIK3R1, PLCG1, SRC, GRB2, STAT3 or the adapter GAB1. Recruitment of these downstream effectors by MET leads to the activation of several signaling cascades including the RAS-ERK, PI3 kinase-AKT, or PLCgamma-PKC. The RAS-ERK activation is associated with the morphogenetic effects while PI3K/AKT coordinates prosurvival effects. During embryonic development, MET signaling plays a role in gastrulation, development and migration of neuronal precursors, angiogenesis and kidney formation. During skeletal muscle development, it is crucial for the migration of muscle progenitor cells and for the proliferation of secondary myoblasts. In adults, participates in wound healing as well as organ regeneration and tissue remodeling. Also promotes differentiation and proliferation of hematopoietic cells. May regulate cortical bone osteogenesis. Its function is as follows. (Microbial infection) Acts as a receptor for Listeria monocytogenes internalin InlB, mediating entry of the pathogen into cells. In Homo sapiens (Human), this protein is Hepatocyte growth factor receptor (MET).